A 204-amino-acid chain; its full sequence is GTP cyclohydrolase-2 (204 aa).

A GTP-binding site is contributed by 49–53; that stretch reads RIHSE. 3 residues coordinate Zn(2+): cysteine 54, cysteine 65, and cysteine 67. Residues glutamine 70, 92–94, and threonine 114 each bind GTP; that span reads EGR. Aspartate 126 functions as the Proton acceptor in the catalytic mechanism. Catalysis depends on arginine 128, which acts as the Nucleophile. Residues threonine 149 and lysine 154 each contribute to the GTP site.

This sequence belongs to the GTP cyclohydrolase II family. Zn(2+) is required as a cofactor.

It catalyses the reaction GTP + 4 H2O = 2,5-diamino-6-hydroxy-4-(5-phosphoribosylamino)-pyrimidine + formate + 2 phosphate + 3 H(+). It participates in cofactor biosynthesis; riboflavin biosynthesis; 5-amino-6-(D-ribitylamino)uracil from GTP: step 1/4. In terms of biological role, catalyzes the conversion of GTP to 2,5-diamino-6-ribosylamino-4(3H)-pyrimidinone 5'-phosphate (DARP), formate and pyrophosphate. The protein is GTP cyclohydrolase-2 of Shewanella baltica (strain OS223).